Here is a 385-residue protein sequence, read N- to C-terminus: Trans-enoyl reductase tasC (385 aa).

49–52 (VDTK) is an NADP(+) binding site. 136-143 (NSWYTVAW) is a substrate binding site. NADP(+) is bound by residues 196-199 (SSST), 219-222 (SARN), and 284-285 (LD). 305-309 (GPELM) provides a ligand contact to substrate. Residue 374–375 (VS) coordinates NADP(+).

The protein belongs to the zinc-containing alcohol dehydrogenase family. Monomer.

The catalysed reaction is (2S,4S)-4-hydroxy-4-methylglutamate + 8 malonyl-CoA + 3 S-adenosyl-L-methionine + ATP + 8 NADPH + 11 H(+) = (2S)-3-[(2S)-3,5-dioxo-4-[(2E,4R,6R,8E,10E,12E)-4,6,12-trimethyltetradeca-2,8,10,12-tetraenoyl]pyrrolidin-2-yl]-2-hydroxy-2-methylpropanoate + AMP + 3 S-adenosyl-L-homocysteine + 8 CO2 + diphosphate + 8 NADP(+) + 8 CoA + 6 H2O. The enzyme catalyses (2S,4R)-4-hydroxy-4-methylglutamate + 8 malonyl-CoA + 3 S-adenosyl-L-methionine + ATP + 8 NADPH + 11 H(+) = (2R)-3-[(2S)-3,5-dioxo-4-[(2E,4R,6R,8E,10E,12E)-4,6,12-trimethyltetradeca-2,8,10,12-tetraenoyl]pyrrolidin-2-yl]-2-hydroxy-2-methylpropanoate + AMP + 3 S-adenosyl-L-homocysteine + 8 CO2 + diphosphate + 8 NADP(+) + 8 CoA + 6 H2O. Its pathway is secondary metabolite biosynthesis. Trans-enoyl reductase; part of the gene cluster that mediates the biosynthesis of the tetramic acids Sch210971 and Sch210972, potential anti-HIV fungal natural product that contain a decalin core. The PKS module of tasS together with the enoylreductase tasC catalyze the formation of the polyketide unit which is then conjugated to 4-hydroxyl-4-methyl glutamate (HMG) by the condensation domain of the tasS NRPS module. One unique structural feature of Sch210971 and Sch210972 is the tetramic acid motif proposed to be derived from the non-proteinogenic amino acid HMG, by a Dieckmann-type condensation catalyzed by the reductase domain of tasS. The aldolase tasA catalyzes the aldol condensation of 2 molecules of pyruvic acid to yield the intermediate 4-hydroxyl-4-methyl-2-oxoglutarate (HMOG), which can then be stereoselectively transaminated, may be by tasG, to form HMG. The Diels-Alderase tas3 then uses the Dieckmann product of tasS as substrate and catalyzes the Diels-Alder cycloaddition to form the decalin ring of Sch210971 and Sch210972. The chain is Trans-enoyl reductase tasC from Hapsidospora irregularis.